A 501-amino-acid chain; its full sequence is Solute carrier family 2, facilitated glucose transporter member 5 (501 aa).

Methionine 1 carries the post-translational modification N-acetylmethionine. At methionine 1–alanine 17 the chain is on the cytoplasmic side. A helical transmembrane segment spans residues leucine 18 to valine 38. Tyrosine 31 contacts D-fructose. Topologically, residues asparagine 39 to threonine 67 are extracellular. An N-linked (GlcNAc...) asparagine glycan is attached at asparagine 50. A helical transmembrane segment spans residues leucine 68–threonine 90. At leucine 91–arginine 97 the chain is on the cytoplasmic side. Residues lysine 98 to serine 118 traverse the membrane as a helical segment. At glutamine 119–glutamate 125 the chain is on the extracellular side. The helical transmembrane segment at leucine 126–tyrosine 148 threads the bilayer. Residues leucine 149 to alanine 160 lie on the Cytoplasmic side of the membrane. Residues leucine 161–leucine 181 form a helical membrane-spanning segment. Residue glutamine 166 coordinates D-fructose. The Extracellular portion of the chain corresponds to arginine 182–tryptophan 191. A helical transmembrane segment spans residues proline 192–phenylalanine 212. The Cytoplasmic segment spans residues proline 213–glutamine 276. The helical transmembrane segment at leucine 277–tyrosine 297 threads the bilayer. Residues glutamine 287 and isoleucine 295–tyrosine 297 contribute to the D-fructose site. Over tyrosine 298–aspartate 312 the chain is Extracellular. A helical membrane pass occupies residues valine 313–phenylalanine 333. Residues valine 334 to arginine 341 are Cytoplasmic-facing. A helical transmembrane segment spans residues phenylalanine 342–leucine 362. Over alanine 363 to tryptophan 370 the chain is Extracellular. Residues methionine 371–isoleucine 393 traverse the membrane as a helical segment. Histidine 386 contributes to the D-fructose binding site. The Cytoplasmic portion of the chain corresponds to proline 394–tyrosine 411. A helical membrane pass occupies residues methionine 412–isoleucine 432. Histidine 418–tryptophan 419 contributes to the D-fructose binding site. Residues glutamine 433–proline 438 lie on the Extracellular side of the membrane. The chain crosses the membrane as a helical span at residues tyrosine 439–valine 459. Topologically, residues proline 460 to glutamine 501 are cytoplasmic.

Belongs to the major facilitator superfamily. Sugar transporter (TC 2.A.1.1) family. Glucose transporter subfamily. As to expression, detected at the apical membrane of villi in the jejunum. Detected in jejunum mucosa. Detected in epididymis and whole testis (at protein level). Detected in small intestine, kidney and testis. Detected in cochlea, but not in inner or outer cochlear hair cells.

It localises to the apical cell membrane. The protein localises to the cell membrane. It is found in the sarcolemma. The catalysed reaction is D-fructose(out) = D-fructose(in). Its activity is regulated as follows. Fructose uptake is inhibited by cytochalasin B. Functionally, functions as a fructose transporter that has only low activity with other monosaccharides. Can mediate the uptake of deoxyglucose, but with low efficiency. Essential for fructose uptake in the small intestine. Plays a role in the regulation of salt uptake and blood pressure in response to dietary fructose. Required for the development of high blood pressure in response to high dietary fructose intake. This chain is Solute carrier family 2, facilitated glucose transporter member 5, found in Mus musculus (Mouse).